Here is a 400-residue protein sequence, read N- to C-terminus: Acetate kinase (400 aa).

Asparagine 10 contributes to the Mg(2+) binding site. Lysine 17 contacts ATP. Arginine 91 serves as a coordination point for substrate. Catalysis depends on aspartate 148, which acts as the Proton donor/acceptor. ATP contacts are provided by residues 208–212 (HLGNG), 283–285 (DCR), and 331–335 (GIGEN). Glutamate 385 is a binding site for Mg(2+).

The protein belongs to the acetokinase family. As to quaternary structure, homodimer. Mg(2+) is required as a cofactor. Requires Mn(2+) as cofactor.

Its subcellular location is the cytoplasm. The enzyme catalyses acetate + ATP = acetyl phosphate + ADP. The protein operates within metabolic intermediate biosynthesis; acetyl-CoA biosynthesis; acetyl-CoA from acetate: step 1/2. Its function is as follows. Catalyzes the formation of acetyl phosphate from acetate and ATP. Can also catalyze the reverse reaction. This chain is Acetate kinase, found in Shewanella frigidimarina (strain NCIMB 400).